Consider the following 270-residue polypeptide: MELGKQRPVVYVVSDSVGETAELVVKAAASQFSGAGIEVRRIPYVEDKETVDEVIQLAKQADAIIAFTLVVPGIRTYLLEKATEAKVETVDIIGPMLEKISSLTKEEPRYEPGIVYRLDEDYFRKVEAIEFAVKYDDGRDPRGIVRADLVLIGVSRTSKTPLSQYLAHKRLKVANVPLVPEVEPPEELFKLSPKKVIGLKISPEQLNGIRAERLKTLGLKSQANYANIDRIKEELAYAEGIMKRIGCPVIDVSNKAVEETANLISSMFQK.

Gly-153–Thr-160 is a binding site for ADP.

The protein belongs to the pyruvate, phosphate/water dikinase regulatory protein family. PDRP subfamily.

The catalysed reaction is N(tele)-phospho-L-histidyl/L-threonyl-[pyruvate, phosphate dikinase] + ADP = N(tele)-phospho-L-histidyl/O-phospho-L-threonyl-[pyruvate, phosphate dikinase] + AMP + H(+). The enzyme catalyses N(tele)-phospho-L-histidyl/O-phospho-L-threonyl-[pyruvate, phosphate dikinase] + phosphate + H(+) = N(tele)-phospho-L-histidyl/L-threonyl-[pyruvate, phosphate dikinase] + diphosphate. Its function is as follows. Bifunctional serine/threonine kinase and phosphorylase involved in the regulation of the pyruvate, phosphate dikinase (PPDK) by catalyzing its phosphorylation/dephosphorylation. This chain is Putative pyruvate, phosphate dikinase regulatory protein, found in Halalkalibacterium halodurans (strain ATCC BAA-125 / DSM 18197 / FERM 7344 / JCM 9153 / C-125) (Bacillus halodurans).